The sequence spans 177 residues: Large ribosomal subunit protein uL6 (177 aa).

This sequence belongs to the universal ribosomal protein uL6 family. In terms of assembly, part of the 50S ribosomal subunit.

Functionally, this protein binds to the 23S rRNA, and is important in its secondary structure. It is located near the subunit interface in the base of the L7/L12 stalk, and near the tRNA binding site of the peptidyltransferase center. The chain is Large ribosomal subunit protein uL6 from Rhizobium etli (strain ATCC 51251 / DSM 11541 / JCM 21823 / NBRC 15573 / CFN 42).